The sequence spans 124 residues: Outer dense fiber protein 2 (124 aa).

The stretch at 13–124 (KEDSERLMEQ…EAIMEQLKEL (112 aa)) forms a coiled coil.

The protein belongs to the ODF2 family. In terms of assembly, self-associates. Associates with microtubules and forms a fibrillar structure partially linked to the microtubule network. Interacts through its C-terminus with PLK1. Interacts with ODF1. Interacts with MARK4; the interaction is required for localization of ODF2 to centrioles. Interacts with TSSK4. Interacts with AKNA. Interacts with QRICH2. Interacts with CFAP58. Interacts with BBOF1. Interacts with CCDC38. Interacts with CCDC42. Post-translationally, tyrosine phosphorylated. In terms of tissue distribution, detected in sperm flagella (at protein level).

The protein resides in the cytoplasm. It localises to the cytoskeleton. It is found in the microtubule organizing center. The protein localises to the centrosome. Its subcellular location is the cell projection. The protein resides in the cilium. It localises to the centriole. It is found in the spindle pole. The protein localises to the flagellum. Seems to be a major component of sperm tail outer dense fibers (ODF). ODFs are filamentous structures located on the outside of the axoneme in the midpiece and principal piece of the mammalian sperm tail and may help to maintain the passive elastic structures and elastic recoil of the sperm tail. May have a modulating influence on sperm motility. Functions as a general scaffold protein that is specifically localized at the distal/subdistal appendages of mother centrioles. Component of the centrosome matrix required for the localization of PLK1 and NIN to the centrosomes. Required for the formation and/or maintenance of normal CETN1 assembly. In Mesocricetus auratus (Golden hamster), this protein is Outer dense fiber protein 2.